Here is a 1663-residue protein sequence, read N- to C-terminus: Cortactin-binding protein 2 (1663 aa).

Disordered stretches follow at residues 1-23 (MATDGASCEPDLSRAPEDAAGAA), 203-222 (KKKTNELEEELSAEKRRSTE), 358-440 (RQAS…LHPG), and 454-479 (GNANDPDQNGNTTQSPPSRDMSPTSR). Positions 119–276 (KKMQERMSAQ…EQLKRGSDSK (158 aa)) form a coiled coil. A compositionally biased stretch (low complexity) spans 386 to 396 (PSTDSTPDPTS). Residues 411-422 (QTPGIAPQNSQA) show a composition bias toward polar residues. R498 is modified (asymmetric dimethylarginine). The interval 499-616 (FTSPQAGAPS…SSPQLPPKPS (118 aa)) is disordered. Over residues 583–593 (TVASPPSSLPQ) the composition is skewed to polar residues. ANK repeat units lie at residues 709–739 (GRPTLLQQAAAQGNVTLLSMLLNEEGLDINY), 743–772 (DGHSALYSAAKNGHTDCVRLLLSAEAQINA), 776–805 (NGFTPLCAAAAQGHFECVELLIAYDANINH), 809–838 (GGQTPLYLACKNENKECIKLLLEAGTNRSV), 842–871 (DGWTPVHAAVDTGNVDSLKLLMYHRIPACG), and 912–942 (EGWTAAHIAASKGFKNCLEILCRHGGLEPER). The tract at residues 1446–1477 (NKKKGESGAWRKVNTSPRRKSGRFSLPTWNKP) is disordered. The residue at position 1524 (S1524) is a Phosphoserine. Disordered stretches follow at residues 1580 to 1602 (SQKEVSPLSSHQTTECSNSKSKT) and 1618 to 1663 (SKVT…KPNK). A compositionally biased stretch (polar residues) spans 1582-1599 (KEVSPLSSHQTTECSNSK). The span at 1624-1638 (SQNTKRSSSSSNTRQ) shows a compositional bias: low complexity. Basic and acidic residues predominate over residues 1645–1663 (SKKENWNLHKNEHLDKPNK).

As to quaternary structure, interacts with CTTN/cortactin SH3 domain. Interacts with STRN, STRN4/zinedin and MOB4/phocein; this interactions mediate the association with the STRIPAK core complex and may regulate dendritic spine distribution of the STRIPAK complex in hippocampal neurons. Activation of glutamate receptors weakens the interaction with STRN and STRN4.

It localises to the cytoplasm. Its subcellular location is the cell cortex. It is found in the cell projection. The protein resides in the dendritic spine. Its function is as follows. Regulates the dendritic spine distribution of CTTN/cortactin in hippocampal neurons, and thus controls dendritic spinogenesis and dendritic spine maintenance. Associates with the striatin-interacting phosphatase and kinase (STRIPAK) core complex to regulate dendritic spine distribution of the STRIPAK complex in hippocampal neurons. In Colobus guereza (Mantled guereza), this protein is Cortactin-binding protein 2 (CTTNBP2).